Here is a 352-residue protein sequence, read N- to C-terminus: DNA polymerase IV (352 aa).

Residues 6 to 186 (IIHIDMDAFY…LPLGKIPGAG (181 aa)) enclose the UmuC domain. Asp10 and Asp104 together coordinate Mg(2+). Glu105 is a catalytic residue.

This sequence belongs to the DNA polymerase type-Y family. Monomer. Mg(2+) serves as cofactor.

Its subcellular location is the cytoplasm. The enzyme catalyses DNA(n) + a 2'-deoxyribonucleoside 5'-triphosphate = DNA(n+1) + diphosphate. In terms of biological role, poorly processive, error-prone DNA polymerase involved in untargeted mutagenesis. Copies undamaged DNA at stalled replication forks, which arise in vivo from mismatched or misaligned primer ends. These misaligned primers can be extended by PolIV. Exhibits no 3'-5' exonuclease (proofreading) activity. May be involved in translesional synthesis, in conjunction with the beta clamp from PolIII. The polypeptide is DNA polymerase IV (Neisseria gonorrhoeae (strain ATCC 700825 / FA 1090)).